The following is a 473-amino-acid chain: Photosystem II CP43 reaction center protein (473 aa).

The propeptide occupies 1 to 14; that stretch reads MKILYSLRRFYHVE. Thr-15 carries the N-acetylthreonine modification. A Phosphothreonine modification is found at Thr-15. The next 5 membrane-spanning stretches (helical) occupy residues 69–93, 134–155, 178–200, 255–275, and 291–312; these read LFEVAHFVPEKPMYEQGLILLPHLA, LLGPETLEESFPFFGYVWKDRN, KALYFGGVYDTWAPGGGDVRKIT, KPFAWARRAFVWSGEAYLSYS, and WFNNTAYPSEFYGPTGPEASQA. [CaMn4O5] cluster is bound at residue Glu-367. The helical transmembrane segment at 447-471 threads the bilayer; sequence RARAAAAGFEKGIDRDLEPVLYMNP.

The protein belongs to the PsbB/PsbC family. PsbC subfamily. PSII is composed of 1 copy each of membrane proteins PsbA, PsbB, PsbC, PsbD, PsbE, PsbF, PsbH, PsbI, PsbJ, PsbK, PsbL, PsbM, PsbT, PsbX, PsbY, PsbZ, Psb30/Ycf12, at least 3 peripheral proteins of the oxygen-evolving complex and a large number of cofactors. It forms dimeric complexes. It depends on Binds multiple chlorophylls and provides some of the ligands for the Ca-4Mn-5O cluster of the oxygen-evolving complex. It may also provide a ligand for a Cl- that is required for oxygen evolution. PSII binds additional chlorophylls, carotenoids and specific lipids. as a cofactor.

It localises to the plastid. It is found in the chloroplast thylakoid membrane. In terms of biological role, one of the components of the core complex of photosystem II (PSII). It binds chlorophyll and helps catalyze the primary light-induced photochemical processes of PSII. PSII is a light-driven water:plastoquinone oxidoreductase, using light energy to abstract electrons from H(2)O, generating O(2) and a proton gradient subsequently used for ATP formation. The sequence is that of Photosystem II CP43 reaction center protein from Brachypodium distachyon (Purple false brome).